We begin with the raw amino-acid sequence, 347 residues long: Oocyte-specific homeobox protein 6 (347 aa).

Disordered regions lie at residues 1–20 (MLQY…HSKF) and 54–86 (PRSP…IQMQ). Over residues 72-85 (QESQGPSGKSSIQM) the composition is skewed to polar residues. Positions 145–204 (HRKIRTVYTEEQKCVLKKHFHKCTYPSREQRMALAVLVGVTANEIQIWFKNHRAKSKRES) form a DNA-binding region, homeobox.

Belongs to the paired homeobox family. Obox subfamily. Specifically expressed in early embryos.

Its subcellular location is the nucleus. Its function is as follows. Transcription factor required for zygotic genome activation (ZGA), a critical event in early embryonic development during which the developmental control passes from maternally provided mRNAs to the expression of the zygotic genome after fertilization. This chain is Oocyte-specific homeobox protein 6, found in Mus musculus (Mouse).